Consider the following 876-residue polypeptide: GRB2-associated and regulator of MAPK protein (876 aa).

A CABIT region spans residues 9 to 318; it reads KDVKWSSASF…NLIKGEVWQD (310 aa). Tyrosine 451 is modified (phosphotyrosine). 2 disordered regions span residues 460 to 569 and 708 to 741; these read SVKR…TLSY and DRMLGDNSTKQSLSCPALPPRAPKPSEGNALSEP. Polar residues predominate over residues 461 to 471; it reads VKRSGQPLTRS. Residues 532-549 show a composition bias toward pro residues; it reads PPVPPRSSKPSSPTPSVP. The span at 556 to 569 shows a compositional bias: polar residues; it reads VRQQTRSPSPTLSY. The SAM domain maps to 811–876; sequence LSVEEVSKSL…QFINGWRPKM (66 aa).

Belongs to the GAREM family.

Its function is as follows. Adapter protein that may provide a link between cell surface epidermal growth factor receptor and the MAPK/ERK signaling pathway. May promote cell proliferation. The chain is GRB2-associated and regulator of MAPK protein (garem1) from Xenopus laevis (African clawed frog).